The following is a 308-amino-acid chain: Alternaria stem canker resistance protein 1 (308 aa).

Transmembrane regions (helical) follow at residues 21–41 (YQDL…RFIL), 82–102 (FVYF…EPWF), 128–148 (LLYM…LYWE), 165–185 (VSLI…VVLA), 213–233 (FSLF…FWII), and 254–274 (IILY…HLFW). The 215-residue stretch at 73–287 (NKFKESAWKF…ILRMVKNQIL (215 aa)) folds into the TLC domain.

The protein localises to the endoplasmic reticulum membrane. Its function is as follows. Mediates resistance to sphinganine-analog mycotoxins (SAMs) by restoring the sphingolipid biosynthesis. Could salvage the transport of GPI-anchored proteins from the endoplasmic reticulum to the Golgi apparatus in ceramides-depleted cells after SAM exposure. This Solanum lycopersicum (Tomato) protein is Alternaria stem canker resistance protein 1.